Consider the following 249-residue polypeptide: NAD(P)H-quinone oxidoreductase subunit K 2 (249 aa).

4 residues coordinate [4Fe-4S] cluster: Cys54, Cys55, Cys119, and Cys150.

It belongs to the complex I 20 kDa subunit family. In terms of assembly, NDH-1 can be composed of about 15 different subunits; different subcomplexes with different compositions have been identified which probably have different functions. The cofactor is [4Fe-4S] cluster.

The protein resides in the cell inner membrane. The catalysed reaction is a plastoquinone + NADH + (n+1) H(+)(in) = a plastoquinol + NAD(+) + n H(+)(out). It carries out the reaction a plastoquinone + NADPH + (n+1) H(+)(in) = a plastoquinol + NADP(+) + n H(+)(out). Its function is as follows. NDH-1 shuttles electrons from an unknown electron donor, via FMN and iron-sulfur (Fe-S) centers, to quinones in the respiratory and/or the photosynthetic chain. The immediate electron acceptor for the enzyme in this species is believed to be plastoquinone. Couples the redox reaction to proton translocation, and thus conserves the redox energy in a proton gradient. Cyanobacterial NDH-1 also plays a role in inorganic carbon-concentration. The protein is NAD(P)H-quinone oxidoreductase subunit K 2 of Gloeobacter violaceus (strain ATCC 29082 / PCC 7421).